The following is a 156-amino-acid chain: Transcription elongation factor GreA (156 aa).

Residues 7–27 (MTQEGLDKLKLELENLKLVKR) are a coiled coil.

This sequence belongs to the GreA/GreB family.

Functionally, necessary for efficient RNA polymerase transcription elongation past template-encoded arresting sites. The arresting sites in DNA have the property of trapping a certain fraction of elongating RNA polymerases that pass through, resulting in locked ternary complexes. Cleavage of the nascent transcript by cleavage factors such as GreA or GreB allows the resumption of elongation from the new 3'terminus. GreA releases sequences of 2 to 3 nucleotides. The polypeptide is Transcription elongation factor GreA (Lactococcus lactis subsp. lactis (strain IL1403) (Streptococcus lactis)).